The chain runs to 141 residues: Large ribosomal subunit protein uL6 (141 aa).

It belongs to the universal ribosomal protein uL6 family.

This chain is Large ribosomal subunit protein uL6, found in Haemonchus contortus (Barber pole worm).